Consider the following 422-residue polypeptide: Glucose-1-phosphate adenylyltransferase (422 aa).

Alpha-D-glucose 1-phosphate is bound by residues Tyr110, Gly175, Glu190–Lys191, and Ser208.

It belongs to the bacterial/plant glucose-1-phosphate adenylyltransferase family. Homotetramer.

It catalyses the reaction alpha-D-glucose 1-phosphate + ATP + H(+) = ADP-alpha-D-glucose + diphosphate. It participates in glycan biosynthesis; glycogen biosynthesis. Its function is as follows. Involved in the biosynthesis of ADP-glucose, a building block required for the elongation reactions to produce glycogen. Catalyzes the reaction between ATP and alpha-D-glucose 1-phosphate (G1P) to produce pyrophosphate and ADP-Glc. In Hydrogenovibrio crunogenus (strain DSM 25203 / XCL-2) (Thiomicrospira crunogena), this protein is Glucose-1-phosphate adenylyltransferase.